We begin with the raw amino-acid sequence, 177 residues long: ATP synthase subunit delta (177 aa).

The protein belongs to the ATPase delta chain family. F-type ATPases have 2 components, F(1) - the catalytic core - and F(0) - the membrane proton channel. F(1) has five subunits: alpha(3), beta(3), gamma(1), delta(1), epsilon(1). F(0) has three main subunits: a(1), b(2) and c(10-14). The alpha and beta chains form an alternating ring which encloses part of the gamma chain. F(1) is attached to F(0) by a central stalk formed by the gamma and epsilon chains, while a peripheral stalk is formed by the delta and b chains.

It is found in the cell inner membrane. Its function is as follows. F(1)F(0) ATP synthase produces ATP from ADP in the presence of a proton or sodium gradient. F-type ATPases consist of two structural domains, F(1) containing the extramembraneous catalytic core and F(0) containing the membrane proton channel, linked together by a central stalk and a peripheral stalk. During catalysis, ATP synthesis in the catalytic domain of F(1) is coupled via a rotary mechanism of the central stalk subunits to proton translocation. In terms of biological role, this protein is part of the stalk that links CF(0) to CF(1). It either transmits conformational changes from CF(0) to CF(1) or is implicated in proton conduction. The protein is ATP synthase subunit delta of Haemophilus influenzae (strain PittGG).